Reading from the N-terminus, the 159-residue chain is Regulator of G-protein signaling 13 (159 aa).

The region spanning 34–150 is the RGS domain; that stretch reads SFENLMATKY…LKSEMYQKLL (117 aa).

In terms of biological role, inhibits signal transduction by increasing the GTPase activity of G protein alpha subunits thereby driving them into their inactive GDP-bound form. Binds to both G(i)-alpha and G(q)-alpha. The chain is Regulator of G-protein signaling 13 (RGS13) from Homo sapiens (Human).